Here is a 312-residue protein sequence, read N- to C-terminus: MQKDIGRRFQRNKKKINSKPGGAMVASSDVEFSLDGMSIMPQRDGNLQIPNFVKPKSTFATSNIGESNGKRNGDKVRGNRRSKSGHSSYAGSRISGGNSNSHLPSGVASAPAGLGIDKVAVGEVDSHLKSVSSYVSNSSGADRSFSSNSSSDTNSILYAGPTFTHSPAASNLPIPTFLHSPVSEKAEWQPPTGSVNSNMPFQFHQSSSVPSTPSEVAMGHNFCPMSRNDPSLQSIQQTNGFYSGHNSPHTNYSASTPSFNHFNAAGHPTGNITPTLNSPNNGIHCHSTSALDLLFHRDREQRLFRMLRQGSA.

2 disordered regions span residues 1-26 and 45-106; these read MQKDIGRRFQRNKKKINSKPGGAMVA and GNLQ…LPSG. Basic residues predominate over residues 8–17; that stretch reads RFQRNKKKIN. Residues 68–77 are compositionally biased toward basic and acidic residues; that stretch reads NGKRNGDKVR. Residues 85–103 are compositionally biased toward polar residues; that stretch reads GHSSYAGSRISGGNSNSHL.

This is an uncharacterized protein from Schizosaccharomyces pombe (strain 972 / ATCC 24843) (Fission yeast).